Reading from the N-terminus, the 163-residue chain is Endoribonuclease YbeY (163 aa).

The Zn(2+) site is built by His121, His125, and His131.

This sequence belongs to the endoribonuclease YbeY family. The cofactor is Zn(2+).

The protein resides in the cytoplasm. In terms of biological role, single strand-specific metallo-endoribonuclease involved in late-stage 70S ribosome quality control and in maturation of the 3' terminus of the 16S rRNA. This chain is Endoribonuclease YbeY, found in Synechococcus sp. (strain JA-3-3Ab) (Cyanobacteria bacterium Yellowstone A-Prime).